We begin with the raw amino-acid sequence, 188 residues long: MSIKSDRWIRRMAEQHGMIEPFEPGQVRHAGEERIVSYGTSSYGYDVRCADEFKIFTNINSSIVDPKAFDARSFVDVKSDVCIIPPNSFALARTVEYFRIPRSVLTICLGKSTYARCGIIVNVTPLEPEWEGHVTLEFSNTTPLPAKIYANEGVAQMLFLESDEVCETSYKDRGGKYQGQVGVTLPKT.

DCTP is bound by residues lysine 111 to arginine 116, threonine 135 to glutamate 137, glutamine 156, tyrosine 170, and glutamine 180. Residue glutamate 137 is the Proton donor/acceptor of the active site.

Belongs to the dCTP deaminase family. Homotrimer.

It carries out the reaction dCTP + H2O + H(+) = dUTP + NH4(+). It participates in pyrimidine metabolism; dUMP biosynthesis; dUMP from dCTP (dUTP route): step 1/2. Its function is as follows. Catalyzes the deamination of dCTP to dUTP. In Thioalkalivibrio sulfidiphilus (strain HL-EbGR7), this protein is dCTP deaminase.